We begin with the raw amino-acid sequence, 113 residues long: Tubulin alpha chain (113 aa).

Glutamate 52 provides a ligand contact to GTP. Glutamate 52 provides a ligand contact to Mg(2+).

This sequence belongs to the tubulin family. Dimer of alpha and beta chains. A typical microtubule is a hollow water-filled tube with an outer diameter of 25 nm and an inner diameter of 15 nM. Alpha-beta heterodimers associate head-to-tail to form protofilaments running lengthwise along the microtubule wall with the beta-tubulin subunit facing the microtubule plus end conferring a structural polarity. Microtubules usually have 13 protofilaments but different protofilament numbers can be found in some organisms and specialized cells. The cofactor is Mg(2+).

Its subcellular location is the cytoplasm. The protein resides in the cytoskeleton. The enzyme catalyses GTP + H2O = GDP + phosphate + H(+). In terms of biological role, tubulin is the major constituent of microtubules, a cylinder consisting of laterally associated linear protofilaments composed of alpha- and beta-tubulin heterodimers. Microtubules grow by the addition of GTP-tubulin dimers to the microtubule end, where a stabilizing cap forms. Below the cap, tubulin dimers are in GDP-bound state, owing to GTPase activity of alpha-tubulin. This is Tubulin alpha chain (TUBA) from Picea abies (Norway spruce).